The sequence spans 101 residues: Small ribosomal subunit protein uS14 (101 aa).

This sequence belongs to the universal ribosomal protein uS14 family. In terms of assembly, part of the 30S ribosomal subunit. Contacts proteins S3 and S10.

Functionally, binds 16S rRNA, required for the assembly of 30S particles and may also be responsible for determining the conformation of the 16S rRNA at the A site. The chain is Small ribosomal subunit protein uS14 from Aliivibrio fischeri (strain ATCC 700601 / ES114) (Vibrio fischeri).